Reading from the N-terminus, the 2663-residue chain is Ankyrin repeat domain-containing protein 11 (2663 aa).

Disordered regions lie at residues 1 to 90 and 128 to 169; these read MPKG…KEPV and SANS…ERGE. Composition is skewed to basic and acidic residues over residues 21 to 54 and 69 to 90; these read MVEK…VRER and EQKD…KEPV. Polar residues predominate over residues 128–155; sequence SANSPVDTTPKHPSQSTVCQKGTPNSAS. Residues 156–169 show a composition bias toward basic and acidic residues; it reads KTKDKVNKRNERGE. ANK repeat units lie at residues 167–196, 200–229, 233–262, and 266–292; these read RGET…DVNV, AGWT…EVNT, DDDT…NPQQ, and KGET…YTSS. S276 is modified (phosphoserine). Disordered stretches follow at residues 289–380, 398–647, and 723–783; these read YTSS…SNSF, APKK…GQCS, and DTNK…NDLK. A compositionally biased stretch (acidic residues) spans 295–305; that stretch reads SSTESSEEEDA. Positions 309–320 are enriched in polar residues; that stretch reads APSSSVDGNNTD. The segment covering 356-376 has biased composition (basic and acidic residues); that stretch reads DRVPPVDDKHLLKKDYRKETK. S408 bears the Phosphoserine mark. T410 is modified (phosphothreonine). Position 411 is a phosphoserine (S411). The segment covering 438–451 has biased composition (basic and acidic residues); it reads KTREPSNAKQQKEK. Residues 452–462 are compositionally biased toward basic residues; it reads NKVKKKRKKET. A compositionally biased stretch (basic and acidic residues) spans 463-477; sequence KGREVRFGKRSDKFC. The span at 481–493 shows a compositional bias: acidic residues; that stretch reads SESESSESGEDDR. The span at 513–531 shows a compositional bias: low complexity; that stretch reads SLFSSLSASSTSSHGSSAA. Residues 539 to 550 are compositionally biased toward basic and acidic residues; sequence TDQHTKHWRTDN. Residues 551 to 562 are compositionally biased toward polar residues; it reads WKTISSPAWSEV. Residues 576-588 show a composition bias toward low complexity; the sequence is ESDYSSEGSSVES. Composition is skewed to basic residues over residues 591 to 602 and 629 to 641; these read PVRKRQEHRKRA and VKKH…HKNK. S834 carries the post-translational modification Phosphoserine. Composition is skewed to basic and acidic residues over residues 881-928, 935-1043, 1059-1090, and 1099-1112; these read VKED…EKHK, SEKD…KSIL, KKDT…KEKA, and FSEK…KEKS. 2 disordered regions span residues 881-1043 and 1059-1393; these read VKED…KSIL and KKDT…GQYE. S1079 is modified (phosphoserine). Position 1120 is a phosphothreonine (T1120). S1123 is modified (phosphoserine). Basic and acidic residues-rich tracts occupy residues 1142–1301, 1330–1347, and 1359–1393; these read DLPR…DKIS, GDDK…LKEK, and KSHD…GQYE. The residue at position 1419 (T1419) is a Phosphothreonine. Basic and acidic residues-rich tracts occupy residues 1424–1446, 1466–1545, 1556–1574, 1587–1597, and 1605–1639; these read STEK…KELK, REKW…KGDP, APSK…KLLG, LSQKDLEIEER, and MKQM…DIPA. Residues 1424–1710 form a disordered region; it reads STEKKDKNDS…TGVPTPTSVL (287 aa). Position 1509 is a phosphoserine (S1509). S1692 is modified (phosphoserine). Polar residues predominate over residues 1698–1710; the sequence is SRPTGVPTPTSVL. S1792 carries the phosphoserine modification. The disordered stretch occupies residues 1814–1836; that stretch reads SVPAASSYDSPMPPSMEDRAPLP. The residue at position 1847 (S1847) is a Phosphoserine. Y1850 and Y1851 each carry phosphotyrosine. Phosphoserine occurs at positions 1852, 1859, and 1990. Disordered stretches follow at residues 1988–2019 and 2131–2406; these read PESP…PAPP and LDLG…STQQ. Low complexity-rich tracts occupy residues 2310-2324 and 2391-2406; these read IQPE…AEAP and RSTQ…STQQ. Residues 2369–2663 form an important for protein degradation region; the sequence is AKARGSEDDD…VNDDFVLLPA (295 aa).

As to quaternary structure, interacts with the PAS region of the p160 coactivators. Subject to proteasomal degradation which is probably essential to regulate its activity.

It localises to the nucleus. In terms of biological role, chromatin regulator which modulates histone acetylation and gene expression in neural precursor cells. May recruit histone deacetylases (HDACs) to the p160 coactivators/nuclear receptor complex to inhibit ligand-dependent transactivation. Has a role in proliferation and development of cortical neural precursors. May also regulate bone homeostasis. This is Ankyrin repeat domain-containing protein 11 (ANKRD11) from Homo sapiens (Human).